A 493-amino-acid chain; its full sequence is Guanosine-5'-triphosphate,3'-diphosphate pyrophosphatase (493 aa).

It belongs to the GppA/Ppx family. GppA subfamily.

It catalyses the reaction guanosine 3'-diphosphate 5'-triphosphate + H2O = guanosine 3',5'-bis(diphosphate) + phosphate + H(+). Its pathway is purine metabolism; ppGpp biosynthesis; ppGpp from GTP: step 2/2. In terms of biological role, catalyzes the conversion of pppGpp to ppGpp. Guanosine pentaphosphate (pppGpp) is a cytoplasmic signaling molecule which together with ppGpp controls the 'stringent response', an adaptive process that allows bacteria to respond to amino acid starvation, resulting in the coordinated regulation of numerous cellular activities. The protein is Guanosine-5'-triphosphate,3'-diphosphate pyrophosphatase of Salmonella choleraesuis (strain SC-B67).